Reading from the N-terminus, the 701-residue chain is Rab-like protein 6 (701 aa).

Met-1 carries the N-acetylmethionine modification. The tract at residues 39 to 279 (GVQYNMKIVI…IFLEMMEARS (241 aa)) is small GTPase-like. GTP contacts are provided by residues 50–57 (GDRNTGKT), 100–104 (DVVDK), and 177–179 (YRD). The interval 279 to 701 (SRGHASPLTT…LRGGGDYEAL (423 aa)) is disordered. The segment covering 284 to 315 (SPLTTSGQSPSSGSQSPVVPPSTVSTGSSSPS) has biased composition (low complexity). Residues 316 to 344 (TPQPVLQPPLQAPPAPPAPAEAPPLPAAP) are compositionally biased toward pro residues. Residues Ser-394, Ser-416, Ser-418, Ser-461, and Ser-462 each carry the phosphoserine modification. A compositionally biased stretch (low complexity) spans 495–506 (ALGPPRDAAPRA). Ser-552 carries the phosphoserine modification. A compositionally biased stretch (basic and acidic residues) spans 555-569 (DAQRRAGEFPVREDL). Ser-570 carries the post-translational modification Phosphoserine. Thr-573 carries the post-translational modification Phosphothreonine. Pro residues predominate over residues 580-589 (VQPPAPPKPL). Positions 608 to 626 (EPGREDSSEQDKEGRPPAK) are enriched in basic and acidic residues. Phosphoserine occurs at positions 614 and 615. The segment at 629–667 (KKKKKKGREEEDKAAKKRSKHKKSRERADDKGRDERRRR) is interaction with CDKN2A. Positions 643–653 (AKKRSKHKKSR) are enriched in basic residues. Basic and acidic residues predominate over residues 654–665 (ERADDKGRDERR). A compositionally biased stretch (gly residues) spans 683 to 701 (LGGGAPSGPLRGGGDYEAL).

This sequence belongs to the small GTPase superfamily. Rab family.

The protein localises to the nucleus. The protein resides in the cytoplasm. Functionally, may enhance cellular proliferation. May reduce growth inhibitory activity of CDKN2A. This chain is Rab-like protein 6 (RABL6), found in Bos taurus (Bovine).